The primary structure comprises 124 residues: MATINQLVRKPRAKKVEKSNVPALEACPQKRGVCTRVYTTTPKKPNSALRKVCRVRLTNGFEVTSYIGGEGHNLQEHSVILIRGGRVKDLPGVRYHTVRGALDCSGVKDRKQSRSKYGVKRPKA.

Residue Asp-89 is modified to 3-methylthioaspartic acid.

The protein belongs to the universal ribosomal protein uS12 family. As to quaternary structure, part of the 30S ribosomal subunit. Contacts proteins S8 and S17. May interact with IF1 in the 30S initiation complex.

Functionally, with S4 and S5 plays an important role in translational accuracy. Its function is as follows. Interacts with and stabilizes bases of the 16S rRNA that are involved in tRNA selection in the A site and with the mRNA backbone. Located at the interface of the 30S and 50S subunits, it traverses the body of the 30S subunit contacting proteins on the other side and probably holding the rRNA structure together. The combined cluster of proteins S8, S12 and S17 appears to hold together the shoulder and platform of the 30S subunit. The sequence is that of Small ribosomal subunit protein uS12 from Edwardsiella ictaluri (strain 93-146).